The sequence spans 205 residues: Non-specific lipid transfer protein GPI-anchored 21 (205 aa).

The signal sequence occupies residues 1–27 (MNSNSFLISAALIFSLLSSNSPTSILA). 4 disulfides stabilise this stretch: cysteine 33-cysteine 75, cysteine 44-cysteine 59, cysteine 60-cysteine 100, and cysteine 73-cysteine 109. Asparagine 89 carries an N-linked (GlcNAc...) asparagine glycan. The interval 116–182 (LPTPGPASFG…FAPPPPSSSP (67 aa)) is disordered. Residues 126–156 (PTTSPTDSQTSDPEGSASFRPPTSPTTSQTP) are compositionally biased toward low complexity. Serine 179 is lipidated: GPI-anchor amidated serine. Positions 180–205 (SSPSSSHSLKLSYLLFAFAFTIIKFI) are cleaved as a propeptide — removed in mature form.

This sequence belongs to the plant LTP family.

It localises to the cell membrane. Probable lipid transfer protein. This Arabidopsis thaliana (Mouse-ear cress) protein is Non-specific lipid transfer protein GPI-anchored 21.